The sequence spans 145 residues: Large ribosomal subunit protein bL9 (145 aa).

Belongs to the bacterial ribosomal protein bL9 family.

In terms of biological role, binds to the 23S rRNA. The protein is Large ribosomal subunit protein bL9 of Ureaplasma urealyticum serovar 10 (strain ATCC 33699 / Western).